The primary structure comprises 229 residues: Secreted RxLR effector protein PITG_22926 (229 aa).

The N-terminal stretch at 1-23 is a signal peptide; it reads MRCNHTLCVVAITFLVSWSQTLS. Residues 34–45 carry the RxLR-dEER motif; that stretch reads PLVRSVSATEER.

It belongs to the RxLR effector family.

It localises to the secreted. The protein resides in the host nucleus. Secreted effector that acts as a RNA silencing suppressor, probably by inhibiting the biogenesis of small RNAs in the host plant, to manipulate host immune responses and promote Phytophthora infection. This Phytophthora infestans (strain T30-4) (Potato late blight agent) protein is Secreted RxLR effector protein PITG_22926.